A 734-amino-acid polypeptide reads, in one-letter code: MELRFPRFSQGLAQDPTTRRIWFGIATAHDFESHDDITEERLYQNIFASHFGQLAIIFLWTSGNLFHVAWQGNFESWIQDPLHVRPIAHAIWDPHFGQPAVEAFTRGGAAGPVNIAYSGVYQWWYTIGLRTNEDLYTGALFLLFLSTLSLIGGWLHLQPKWKPSLSWFKNAESRLNHHLSGLFGVSSLAWTGHLVHVAIPGSRGEYVRWNNFLDVLPYPQGLGPLLTGQWNLYAQNPDSSNHLFGTTQGAGTAILTLLGGFHPQTQSLWLTDIAHHHLAIAFIFLIAGHMYRTNFGIGHSIKDLLEAHTPPGGRLGRGHKGLYDTINNSIHFQLGLALASLGVITSLVAQHMYSLPAYAFIAQDFTTQAALYTHHQYIAGFIMTGAFAHGAIFFIRDYNPEQNEDNVLARMLDHKEAIISHLSWASLFLGFHTLGLYVHNDVMLAFGTPEKQILIEPIFAQWIQSAHGKTTYGFDILLSSTNGPAFNAGRNIWLPGWLNAVNENSNSLFLTIGPGDFLVHHAIALGLHTTTLILVKGALDARGSKLMPDKKDFGYSFPCDGPGRGGTCDISAWDAFYLAVFWMLNTIGWVTFYWHWKHITLWQGNVSQFNESSTYLMGWLRDYLWLNSSQLINGYNPFGMNSLSVWAWMFLFGHLVWATGFMFLISWRGYWQELIETLAWAHERTPLANLIRWRDKPVALSIVQARLVGLAHFSVGYIFTYAAFLIASTSGKFG.

A run of 8 helical transmembrane segments spans residues 46–69 (IFAS…FHVA), 135–158 (LYTG…LHLQ), 175–199 (LNHH…HVAI), 273–291 (IAHH…GHMY), 330–353 (IHFQ…QHMY), 369–395 (AALY…IFFI), 417–439 (AIIS…LYVH), and 517–535 (FLVH…LILV). [4Fe-4S] cluster-binding residues include Cys-559 and Cys-568. A run of 2 helical transmembrane segments spans residues 575–596 (AFYL…YWHW) and 643–665 (LSVW…MFLI). The chlorophyll a site is built by His-654, Met-662, and Tyr-670. Trp-671 is a binding site for phylloquinone. A helical transmembrane segment spans residues 707–727 (LVGLAHFSVGYIFTYAAFLIA).

The protein belongs to the PsaA/PsaB family. As to quaternary structure, the PsaA/B heterodimer binds the P700 chlorophyll special pair and subsequent electron acceptors. PSI consists of a core antenna complex that captures photons, and an electron transfer chain that converts photonic excitation into a charge separation. The eukaryotic PSI reaction center is composed of at least 11 subunits. P700 is a chlorophyll a/chlorophyll a' dimer, A0 is one or more chlorophyll a, A1 is one or both phylloquinones and FX is a shared 4Fe-4S iron-sulfur center. is required as a cofactor.

Its subcellular location is the plastid. It localises to the chloroplast thylakoid membrane. The catalysed reaction is reduced [plastocyanin] + hnu + oxidized [2Fe-2S]-[ferredoxin] = oxidized [plastocyanin] + reduced [2Fe-2S]-[ferredoxin]. Functionally, psaA and PsaB bind P700, the primary electron donor of photosystem I (PSI), as well as the electron acceptors A0, A1 and FX. PSI is a plastocyanin-ferredoxin oxidoreductase, converting photonic excitation into a charge separation, which transfers an electron from the donor P700 chlorophyll pair to the spectroscopically characterized acceptors A0, A1, FX, FA and FB in turn. Oxidized P700 is reduced on the lumenal side of the thylakoid membrane by plastocyanin. The sequence is that of Photosystem I P700 chlorophyll a apoprotein A2 from Saccharum hybrid (Sugarcane).